Reading from the N-terminus, the 85-residue chain is U5-theraphotoxin-Hhn1a (85 aa).

A signal peptide spans 1–21 (MKSQIFFAVAALFLLTVRTYA). Residues 22–49 (SKSKEQDLRDALFSAMFSADNQLNPQER) constitute a propeptide that is removed on maturation. 3 disulfides stabilise this stretch: Cys51–Cys65, Cys58–Cys70, and Cys64–Cys77.

The protein belongs to the neurotoxin 10 (Hwtx-1) family. 18 (Hntx-VII) subfamily. In terms of tissue distribution, expressed by the venom gland.

It is found in the secreted. Its function is as follows. Ion channel impairing toxin that inhibits voltage-gated sodium channels. The recombinantly expressed toxin shows a weak activity against Nav1.7/SCN9A, and shifts the voltage dependence of channel activation to more depolarized potentials. In Cyriopagopus hainanus (Chinese bird spider), this protein is U5-theraphotoxin-Hhn1a.